The sequence spans 338 residues: Ketol-acid reductoisomerase (NADP(+)) (338 aa).

Residues 1–181 (MKVYYDKDCD…GGGRTGIIET (181 aa)) form the KARI N-terminal Rossmann domain. NADP(+) contacts are provided by residues 24–27 (YGSQ), arginine 47, serine 50, serine 52, and 82–85 (DEFQ). The active site involves histidine 107. Glycine 133 is a binding site for NADP(+). The region spanning 182-327 (TFKDETETDL…EKLRTMMPWI (146 aa)) is the KARI C-terminal knotted domain. Mg(2+)-binding residues include aspartate 190, glutamate 194, glutamate 226, and glutamate 230. Position 251 (serine 251) interacts with substrate.

This sequence belongs to the ketol-acid reductoisomerase family. The cofactor is Mg(2+).

It carries out the reaction (2R)-2,3-dihydroxy-3-methylbutanoate + NADP(+) = (2S)-2-acetolactate + NADPH + H(+). The catalysed reaction is (2R,3R)-2,3-dihydroxy-3-methylpentanoate + NADP(+) = (S)-2-ethyl-2-hydroxy-3-oxobutanoate + NADPH + H(+). The protein operates within amino-acid biosynthesis; L-isoleucine biosynthesis; L-isoleucine from 2-oxobutanoate: step 2/4. Its pathway is amino-acid biosynthesis; L-valine biosynthesis; L-valine from pyruvate: step 2/4. Involved in the biosynthesis of branched-chain amino acids (BCAA). Catalyzes an alkyl-migration followed by a ketol-acid reduction of (S)-2-acetolactate (S2AL) to yield (R)-2,3-dihydroxy-isovalerate. In the isomerase reaction, S2AL is rearranged via a Mg-dependent methyl migration to produce 3-hydroxy-3-methyl-2-ketobutyrate (HMKB). In the reductase reaction, this 2-ketoacid undergoes a metal-dependent reduction by NADPH to yield (R)-2,3-dihydroxy-isovalerate. This is Ketol-acid reductoisomerase (NADP(+)) from Azotobacter vinelandii (strain DJ / ATCC BAA-1303).